Reading from the N-terminus, the 93-residue chain is Ferredoxin-2 (93 aa).

The 2Fe-2S ferredoxin-type domain occupies 2–91; that stretch reads YKVTLKTPDG…DVVIETHKED (90 aa). Positions 37, 42, 45, and 75 each coordinate [2Fe-2S] cluster.

Belongs to the 2Fe2S plant-type ferredoxin family. Requires [2Fe-2S] cluster as cofactor.

The protein resides in the plastid. It localises to the chloroplast. Ferredoxins are iron-sulfur proteins that transfer electrons in a wide variety of metabolic reactions. The sequence is that of Ferredoxin-2 from Equisetum telmateia (Great horsetail).